The chain runs to 295 residues: Phosphatidylserine decarboxylase proenzyme (295 aa).

Catalysis depends on charge relay system; for autoendoproteolytic cleavage activity residues Asp-113, His-169, and Ser-256. Residue Ser-256 is the Schiff-base intermediate with substrate; via pyruvic acid; for decarboxylase activity of the active site. Ser-256 carries the pyruvic acid (Ser); by autocatalysis modification.

Belongs to the phosphatidylserine decarboxylase family. PSD-B subfamily. Prokaryotic type II sub-subfamily. In terms of assembly, heterodimer of a large membrane-associated beta subunit and a small pyruvoyl-containing alpha subunit. It depends on pyruvate as a cofactor. In terms of processing, is synthesized initially as an inactive proenzyme. Formation of the active enzyme involves a self-maturation process in which the active site pyruvoyl group is generated from an internal serine residue via an autocatalytic post-translational modification. Two non-identical subunits are generated from the proenzyme in this reaction, and the pyruvate is formed at the N-terminus of the alpha chain, which is derived from the carboxyl end of the proenzyme. The autoendoproteolytic cleavage occurs by a canonical serine protease mechanism, in which the side chain hydroxyl group of the serine supplies its oxygen atom to form the C-terminus of the beta chain, while the remainder of the serine residue undergoes an oxidative deamination to produce ammonia and the pyruvoyl prosthetic group on the alpha chain. During this reaction, the Ser that is part of the protease active site of the proenzyme becomes the pyruvoyl prosthetic group, which constitutes an essential element of the active site of the mature decarboxylase.

The protein localises to the cell membrane. It carries out the reaction a 1,2-diacyl-sn-glycero-3-phospho-L-serine + H(+) = a 1,2-diacyl-sn-glycero-3-phosphoethanolamine + CO2. Its pathway is phospholipid metabolism; phosphatidylethanolamine biosynthesis; phosphatidylethanolamine from CDP-diacylglycerol: step 2/2. In terms of biological role, catalyzes the formation of phosphatidylethanolamine (PtdEtn) from phosphatidylserine (PtdSer). This Clostridium botulinum (strain 657 / Type Ba4) protein is Phosphatidylserine decarboxylase proenzyme.